The following is a 249-amino-acid chain: U2 small nuclear ribonucleoprotein A' (249 aa).

LRR repeat units follow at residues 20–41 (KERE…GATE), 43–64 (QFDT…PYLN), 65–87 (RLGT…GEFL), and 89–110 (KLHS…DPLA). The LRRCT domain occupies 123 to 161 (NNITKKANYRLYVIHKLKSLRVLDFIKIKAKERAEAASL).

It belongs to the U2 small nuclear ribonucleoprotein A family.

It is found in the nucleus. It localises to the nucleus speckle. This protein is associated with sn-RNP U2. It helps the A' protein to bind stem loop IV of U2 snRNA. This is U2 small nuclear ribonucleoprotein A' from Arabidopsis thaliana (Mouse-ear cress).